The primary structure comprises 377 residues: Ribosomal RNA large subunit methyltransferase G (377 aa).

This sequence belongs to the methyltransferase superfamily. RlmG family.

It localises to the cytoplasm. It catalyses the reaction guanosine(1835) in 23S rRNA + S-adenosyl-L-methionine = N(2)-methylguanosine(1835) in 23S rRNA + S-adenosyl-L-homocysteine + H(+). Specifically methylates the guanine in position 1835 (m2G1835) of 23S rRNA. In Shewanella sp. (strain MR-4), this protein is Ribosomal RNA large subunit methyltransferase G.